Here is a 151-residue protein sequence, read N- to C-terminus: SsrA-binding protein (151 aa).

A disordered region spans residues 132-151 (KRQTIKKRDQDREIHRKYGI).

It belongs to the SmpB family.

It localises to the cytoplasm. In terms of biological role, required for rescue of stalled ribosomes mediated by trans-translation. Binds to transfer-messenger RNA (tmRNA), required for stable association of tmRNA with ribosomes. tmRNA and SmpB together mimic tRNA shape, replacing the anticodon stem-loop with SmpB. tmRNA is encoded by the ssrA gene; the 2 termini fold to resemble tRNA(Ala) and it encodes a 'tag peptide', a short internal open reading frame. During trans-translation Ala-aminoacylated tmRNA acts like a tRNA, entering the A-site of stalled ribosomes, displacing the stalled mRNA. The ribosome then switches to translate the ORF on the tmRNA; the nascent peptide is terminated with the 'tag peptide' encoded by the tmRNA and targeted for degradation. The ribosome is freed to recommence translation, which seems to be the essential function of trans-translation. The protein is SsrA-binding protein of Lactobacillus johnsonii (strain CNCM I-12250 / La1 / NCC 533).